The sequence spans 234 residues: Small ribosomal subunit protein uS3 (234 aa).

Residues 39-107 enclose the KH type-2 domain; it reads IRKFLKKELY…EVSINIKEVK (69 aa).

The protein belongs to the universal ribosomal protein uS3 family. In terms of assembly, part of the 30S ribosomal subunit. Forms a tight complex with proteins S10 and S14.

Its function is as follows. Binds the lower part of the 30S subunit head. Binds mRNA in the 70S ribosome, positioning it for translation. The chain is Small ribosomal subunit protein uS3 from Helicobacter acinonychis (strain Sheeba).